The primary structure comprises 355 residues: tRNA pseudouridine synthase D (355 aa).

Catalysis depends on Asp84, which acts as the Nucleophile. The TRUD domain occupies Gly160–Leu306.

Belongs to the pseudouridine synthase TruD family.

The catalysed reaction is uridine(13) in tRNA = pseudouridine(13) in tRNA. In terms of biological role, responsible for synthesis of pseudouridine from uracil-13 in transfer RNAs. This is tRNA pseudouridine synthase D from Pseudomonas aeruginosa (strain UCBPP-PA14).